Consider the following 259-residue polypeptide: Haloacid dehalogenase-like hydrolase domain-containing protein 2 (259 aa).

Mg(2+) is bound by residues Asp13 and Ser15. Substrate-binding positions include 13–15 and 46–47; these read DLS and TN. Residues 47-71 are a coiled coil; the sequence is NTTKESKQDLLERLRKLEFDISEDE. Lys50 carries the post-translational modification N6-succinyllysine. A substrate-binding site is contributed by Lys179. Residue Asp204 participates in Mg(2+) binding.

The protein belongs to the HAD-like hydrolase superfamily. Mg(2+) serves as cofactor.

The chain is Haloacid dehalogenase-like hydrolase domain-containing protein 2 (HDHD2) from Pongo abelii (Sumatran orangutan).